We begin with the raw amino-acid sequence, 460 residues long: Crocetin glucosyltransferase 2 (460 aa).

Residue His-19 is the Proton acceptor of the active site. His-19 is a binding site for an anthocyanidin. UDP-alpha-D-glucose is bound by residues Thr-133, Gln-333, His-348, Trp-351, Asn-352, Ser-353, Glu-356, Asp-372, and Gln-373.

The protein belongs to the UDP-glycosyltransferase family. In terms of tissue distribution, mainly expressed in fully developed stigmas.

The enzyme catalyses crocetin + UDP-alpha-D-glucose = beta-D-glucosyl crocetin + UDP. The catalysed reaction is beta-D-glucosyl crocetin + UDP-alpha-D-glucose = bis(beta-D-glucosyl) crocetin + UDP. It catalyses the reaction beta-D-gentiobiosyl crocetin + UDP-alpha-D-glucose = beta-D-gentiobiosyl beta-D-glucosyl crocetin + UDP. Crocetin glucosyltransferase involved in the synthesis of crocin, one of the apocarotenoids responsible for the color and bitter taste of saffron. This chain is Crocetin glucosyltransferase 2 (GLT2), found in Crocus sativus (Saffron).